A 232-amino-acid polypeptide reads, in one-letter code: Ribosomal RNA small subunit methyltransferase G (232 aa).

Residues Gly93, Leu98, 144-145 (VE), and Arg163 each bind S-adenosyl-L-methionine.

It belongs to the methyltransferase superfamily. RNA methyltransferase RsmG family.

The protein resides in the cytoplasm. It carries out the reaction guanosine(527) in 16S rRNA + S-adenosyl-L-methionine = N(7)-methylguanosine(527) in 16S rRNA + S-adenosyl-L-homocysteine. In terms of biological role, specifically methylates the N7 position of guanine in position 527 of 16S rRNA. The sequence is that of Ribosomal RNA small subunit methyltransferase G from Burkholderia pseudomallei (strain 1106a).